The chain runs to 766 residues: Protein sak1 (766 aa).

Residues 101-176 constitute a DNA-binding region (RFX-type winged-helix); sequence GICWLKRACE…YHYCGIKLRG (76 aa). Phosphoserine is present on residues serine 223, serine 224, and serine 227. Disordered stretches follow at residues 271–308 and 708–731; these read PQAH…QPTY and LQEH…QQQQ. Residues 279 to 289 are compositionally biased toward polar residues; the sequence is HLSQSNVPPQL. Composition is skewed to low complexity over residues 290–308 and 715–731; these read SHSS…QPTY and QQHF…QQQQ.

Belongs to the RFX family.

It is found in the nucleus. Functionally, positively regulates cyclic AMP-dependent protein kinase-mediated exit from the mitotic cell cycle. In Schizosaccharomyces pombe (strain 972 / ATCC 24843) (Fission yeast), this protein is Protein sak1 (sak1).